Reading from the N-terminus, the 350-residue chain is Kelch domain-containing protein 8A (350 aa).

Kelch repeat units follow at residues 1-31 (MEVP…ETGG), 32-79 (QVYA…ALGK), 81-127 (IMVI…AKDY), 128-175 (RVYA…LRGS), 176-222 (KIYV…TLDN), 224-278 (LYSL…GLSG), and 279-326 (RVIV…VFKN).

This Mus musculus (Mouse) protein is Kelch domain-containing protein 8A (Klhdc8a).